Here is a 166-residue protein sequence, read N- to C-terminus: Antibacterial peptide PMAP-36 (166 aa).

A signal peptide spans 1 to 29 (METQRASLCLGRWSLWLLLLGLVVPSASA). The propeptide occupies 30–129 (QALSYREAVL…LDINCDEIQS (100 aa)). Cystine bridges form between Cys85–Cys96 and Cys107–Cys124.

This sequence belongs to the cathelicidin family.

It is found in the secreted. Exerts antimicrobial activity against both Gram-positive and negative bacteria. Its activity appears to be mediated by its ability to damage bacterial membranes. The sequence is that of Antibacterial peptide PMAP-36 (PMAP36) from Sus scrofa (Pig).